Consider the following 656-residue polypeptide: DNA ligase (656 aa).

Residues 32–36 (DAVYD) and 81–82 (SL) each bind NAD(+). Lys112 functions as the N6-AMP-lysine intermediate in the catalytic mechanism. NAD(+)-binding residues include Arg133, Glu167, and Lys306. 4 residues coordinate Zn(2+): Cys400, Cys403, Cys416, and Cys421. The 80-residue stretch at 577–656 (KSSSVFNNKT…ELLKRLKELD (80 aa)) folds into the BRCT domain.

The protein belongs to the NAD-dependent DNA ligase family. LigA subfamily. Requires Mg(2+) as cofactor. The cofactor is Mn(2+).

It catalyses the reaction NAD(+) + (deoxyribonucleotide)n-3'-hydroxyl + 5'-phospho-(deoxyribonucleotide)m = (deoxyribonucleotide)n+m + AMP + beta-nicotinamide D-nucleotide.. Its function is as follows. DNA ligase that catalyzes the formation of phosphodiester linkages between 5'-phosphoryl and 3'-hydroxyl groups in double-stranded DNA using NAD as a coenzyme and as the energy source for the reaction. It is essential for DNA replication and repair of damaged DNA. The chain is DNA ligase from Helicobacter pylori (strain HPAG1).